A 651-amino-acid chain; its full sequence is Probable potassium transport system protein Kup (651 aa).

Transmembrane regions (helical) follow at residues 41–61 (LVLG…IYAF), 82–102 (VVSF…VLFV), 130–150 (LILG…VITP), 163–183 (IVAP…LVTL), 194–214 (VAIV…ASGL), 235–255 (FLTV…LAMT), 276–296 (WLWI…AFIL), 309–329 (MIPS…TVIA), 366–386 (IYIP…VLGF), 395–415 (AYGI…YIVM), 426–446 (ALPI…ANII), and 450–470 (EGGW…WTWV).

This sequence belongs to the HAK/KUP transporter (TC 2.A.72) family.

It is found in the cell inner membrane. It catalyses the reaction K(+)(in) + H(+)(in) = K(+)(out) + H(+)(out). Functionally, transport of potassium into the cell. Likely operates as a K(+):H(+) symporter. The protein is Probable potassium transport system protein Kup of Brucella ovis (strain ATCC 25840 / 63/290 / NCTC 10512).